The primary structure comprises 471 residues: Glutamate--tRNA ligase (471 aa).

The 'HIGH' region signature appears at 9–19; the sequence is PSPTGFLHVGG. Zn(2+) is bound by residues cysteine 98, cysteine 100, cysteine 125, and aspartate 127. The 'KMSKS' region motif lies at 237 to 241; that stretch reads KLSKR. Residue lysine 240 participates in ATP binding.

Belongs to the class-I aminoacyl-tRNA synthetase family. Glutamate--tRNA ligase type 1 subfamily. In terms of assembly, monomer. The cofactor is Zn(2+).

The protein localises to the cytoplasm. The catalysed reaction is tRNA(Glu) + L-glutamate + ATP = L-glutamyl-tRNA(Glu) + AMP + diphosphate. Functionally, catalyzes the attachment of glutamate to tRNA(Glu) in a two-step reaction: glutamate is first activated by ATP to form Glu-AMP and then transferred to the acceptor end of tRNA(Glu). In Aeromonas hydrophila subsp. hydrophila (strain ATCC 7966 / DSM 30187 / BCRC 13018 / CCUG 14551 / JCM 1027 / KCTC 2358 / NCIMB 9240 / NCTC 8049), this protein is Glutamate--tRNA ligase.